Reading from the N-terminus, the 255-residue chain is Testis-specific H1 histone (255 aa).

The tract at residues 1 to 54 (MEQALTGEAQSRWPRRGGSGAMAEAPGPSGESRGHSATQLPAEKTVGGPSRGCS) is disordered. Phosphoserine is present on serine 56. The span at 124 to 134 (KVPKPRRKPGR) shows a compositional bias: basic residues. Residues 124–255 (KVPKPRRKPG…PKKPAQRTIQ (132 aa)) form a disordered region. The span at 142–152 (RAPWRTPAAPR) shows a compositional bias: low complexity. Basic residues-rich tracts occupy residues 153–166 (SSRR…KAAR) and 174–194 (RNAR…RARP). Composition is skewed to basic and acidic residues over residues 195 to 230 (RAKE…PRSG) and 238 to 248 (KPREEKQEPKK).

The protein belongs to the histone H1/H5 family. Testis-specific.

The protein resides in the nucleus. It localises to the chromosome. Essential for normal spermatogenesis and male fertility. Required for proper cell restructuring and DNA condensation during the elongation phase of spermiogenesis. Involved in the histone-protamine transition of sperm chromatin and the subsequent production of functional sperm. Binds both double-stranded and single-stranded DNA, ATP and protamine-1. This is Testis-specific H1 histone from Homo sapiens (Human).